The following is a 606-amino-acid chain: Kelch repeat and BTB domain-containing protein 8 (606 aa).

One can recognise a BTB domain in the interval 55–123 (TDIVVQVDHG…AYTSRVQLTE (69 aa)). Residues 158 to 258 (CIGVFSFADH…PLMEETFVEQ (101 aa)) form the BACK domain. Kelch repeat units lie at residues 342-396 (ELYI…HCCG), 397-447 (KLYA…EYKD), 449-487 (IYIL…VYKD), 488-534 (SIYY…KLVV), and 546-593 (TQVS…FECA).

It belongs to the KBTBD8 family. As to quaternary structure, component of the BCR(KBTBD8) E3 ubiquitin ligase complex.

The protein localises to the cytoplasm. The protein resides in the cytoskeleton. It localises to the spindle. It is found in the golgi apparatus. Functionally, substrate-specific adapter of a BCR (BTB-CUL3-RBX1) E3 ubiquitin ligase complex that acts as a regulator of neural crest specification. The BCR(KBTBD8) complex acts by mediating monoubiquitination of target proteins. This is Kelch repeat and BTB domain-containing protein 8 (kbtbd8) from Xenopus tropicalis (Western clawed frog).